A 475-amino-acid chain; its full sequence is ADP-ribosyltransferase toxin AexT (475 aa).

In terms of domain architecture, Bacterial Rho-GAP spans 93–226; it reads VSPEDLQRLM…LQRAVKAEVA (134 aa). The region spanning 260 to 436 is the TR mART core domain; the sequence is EGLQEQFGLE…RVLEEASLGE (177 aa). Catalysis depends on residues arginine 340, serine 364, and glutamate 403.

The protein resides in the secreted. Functionally, directly involved in the toxicity for RTG-2 (rainbow trout gonad) fish cells. The sequence is that of ADP-ribosyltransferase toxin AexT (aexT) from Aeromonas salmonicida.